Consider the following 341-residue polypeptide: Holliday junction branch migration complex subunit RuvB (341 aa).

Residues 1–182 form a large ATPase domain (RuvB-L) region; it reads MTERFVTPDF…FGVICRLEFY (182 aa). ATP-binding positions include Leu21, Arg22, Gly63, Lys66, Thr67, Thr68, 129-131, Arg172, Tyr182, and Arg219; that span reads EDY. Thr67 contacts Mg(2+). Residues 183 to 253 form a small ATPAse domain (RuvB-S) region; sequence TDDELATIAG…IADMALSRLE (71 aa). Residues 256-341 are head domain (RuvB-H); the sequence is NCGLDHMDRL…RGKTSGELFS (86 aa). Arg311 and Arg316 together coordinate DNA.

The protein belongs to the RuvB family. As to quaternary structure, homohexamer. Forms an RuvA(8)-RuvB(12)-Holliday junction (HJ) complex. HJ DNA is sandwiched between 2 RuvA tetramers; dsDNA enters through RuvA and exits via RuvB. An RuvB hexamer assembles on each DNA strand where it exits the tetramer. Each RuvB hexamer is contacted by two RuvA subunits (via domain III) on 2 adjacent RuvB subunits; this complex drives branch migration. In the full resolvosome a probable DNA-RuvA(4)-RuvB(12)-RuvC(2) complex forms which resolves the HJ.

The protein resides in the cytoplasm. It catalyses the reaction ATP + H2O = ADP + phosphate + H(+). Functionally, the RuvA-RuvB-RuvC complex processes Holliday junction (HJ) DNA during genetic recombination and DNA repair, while the RuvA-RuvB complex plays an important role in the rescue of blocked DNA replication forks via replication fork reversal (RFR). RuvA specifically binds to HJ cruciform DNA, conferring on it an open structure. The RuvB hexamer acts as an ATP-dependent pump, pulling dsDNA into and through the RuvAB complex. RuvB forms 2 homohexamers on either side of HJ DNA bound by 1 or 2 RuvA tetramers; 4 subunits per hexamer contact DNA at a time. Coordinated motions by a converter formed by DNA-disengaged RuvB subunits stimulates ATP hydrolysis and nucleotide exchange. Immobilization of the converter enables RuvB to convert the ATP-contained energy into a lever motion, pulling 2 nucleotides of DNA out of the RuvA tetramer per ATP hydrolyzed, thus driving DNA branch migration. The RuvB motors rotate together with the DNA substrate, which together with the progressing nucleotide cycle form the mechanistic basis for DNA recombination by continuous HJ branch migration. Branch migration allows RuvC to scan DNA until it finds its consensus sequence, where it cleaves and resolves cruciform DNA. This Syntrophotalea carbinolica (strain DSM 2380 / NBRC 103641 / GraBd1) (Pelobacter carbinolicus) protein is Holliday junction branch migration complex subunit RuvB.